The sequence spans 295 residues: MATPLFHGSIVALVTPMTHGEVNYEELKRLVEHHVQAGTHGIVSVGTTGESTTLSIDENVKVIKKTVEFADGRIPIIAGTGSNATSEAIILTKLLTNSGVAGCLSVVPYYNKPTQEGMYLHYKAIAESTDLPQILYNVPSRTGSDLKPETIGRLAEIPNIVGVKEATGDLTRLPLIKKLAGEDFIFLSGDDATGLESMKLGGQGVISVTNNVAAADMAKMCELALAGKFDEAEAINQRLMALHHDLFIEANPIPVKWAAYKLGLISEPNLRLPLTTLSEAAQPTVLAALQKAGLI.

Pyruvate is bound at residue Thr48. Residue Tyr136 is the Proton donor/acceptor of the active site. Residue Lys164 is the Schiff-base intermediate with substrate of the active site. Pyruvate is bound at residue Ile206.

This sequence belongs to the DapA family. Homotetramer; dimer of dimers.

It is found in the cytoplasm. The catalysed reaction is L-aspartate 4-semialdehyde + pyruvate = (2S,4S)-4-hydroxy-2,3,4,5-tetrahydrodipicolinate + H2O + H(+). It functions in the pathway amino-acid biosynthesis; L-lysine biosynthesis via DAP pathway; (S)-tetrahydrodipicolinate from L-aspartate: step 3/4. Catalyzes the condensation of (S)-aspartate-beta-semialdehyde [(S)-ASA] and pyruvate to 4-hydroxy-tetrahydrodipicolinate (HTPA). This chain is 4-hydroxy-tetrahydrodipicolinate synthase, found in Actinobacillus pleuropneumoniae serotype 7 (strain AP76).